We begin with the raw amino-acid sequence, 238 residues long: Probable RNA/DNA demethylase ALKBH6 (238 aa).

A Fe2OG dioxygenase domain is found at Pro96–Pro227. Positions 103 and 105 each coordinate 2-oxoglutarate. Fe cation contacts are provided by His114, Asp116, and His182. 2-oxoglutarate-binding residues include Arg218 and Ser220.

It belongs to the alkB family. As to quaternary structure, interacts with VCPKMT. Fe(2+) is required as a cofactor.

The protein resides in the cytoplasm. The protein localises to the nucleus. In terms of biological role, probable Fe(2+)/2-oxoglutarate-dependent dioxygenase involved in oxidative demethylation of nucleic acids. Binds nucleic acids with a preference for ssDNA or ssRNA to other types of DNAs. May play a role in nucleic acid damage repair. The polypeptide is Probable RNA/DNA demethylase ALKBH6 (Alkbh6) (Mus musculus (Mouse)).